The chain runs to 993 residues: MKLFPRSILITLVLSFALNLGIVTKIHAKDTLDSIVDILSGLTCETQGVGDLLRTEFSHTCIVAPFFTFAVMNLVSPVLYMNTFLKLKINDSDLFNDSNFGNFPGGQCTRENRIDPKNPELRFALCNNAKLIVSRAKSVAESALAIAKAVLTGSDPWDDIKTAWANKKKEYHVPYSGKPGDDGFAFDLGFPVIYWKVIQDKDRICVSTKGFTGDVPVGCKYMKEPFPKSMYNSFMDVADKDFIEDPNKTPTDPLALVSCSAAGDGCYQKAYNASKTAVVMTSPLIECMRQMIARLLISKDVCSFDNVSQVVNLVSRQDSVFFQFQVGMYKIVTAFLTLYVMFFGFKLLLAGEVPPKSEYINFILKMIFVTYFSIGINITPGNGSPYDRLDGMIQWAFPFLLDGINGLASWVMNAAPSGLCKFNNLSYDGTVSYIALWDALDCRVAHYLGLDILSTLLVENAYRSHDFLNFDFFSFSAPPYIYLLIPAIISGNMMLVSLALSYPLLVISVAAFMVNATIMCMISIVILGILAPLFVPMFLFAYTRNYFESWVKLMISFLLQPMVVVTFMITMFSVYDYGFYGKCQYKSKLIHNSIEDKIQGGITSKRDVLIFYINNDWDDTSQYPDKDAVESCQNSLGYMLNNPITTVFNFTKDSVSEIVGSKPGSTPTDKFLAKFQFLSGVVLGPGMFFMSPKVLFEKIKNILLALVMACFTLYLMYNFSSQLAEFAADMTEGVALNNVAIKPQAIFKAAMAVLATAGAATKGGDQIASRGGVGDLKAGQGGGASDLEVGKGGLPNDNIAASGGTSAPAVTTPTASSSVASSSPKTVSSEARSDVVTPPAPTEAVSPPPASIRTSISTLAPRVGKIIRDNNQESKKEIDNTPPSQEKVDNAAPQEKVDSTSKGTGVIDYSFNLKEHDNPTGVKQIRENAEIRDKRVKVEKAWNELVARGGGRVREQEGGEISERRANAEKAWDELVKSGVVTEKKDNSSNENS.

The N-terminal stretch at 1-28 (MKLFPRSILITLVLSFALNLGIVTKIHA) is a signal peptide. 7 helical membrane passes run 331–351 (IVTA…LLAG), 359–379 (YINF…INIT), 392–412 (MIQW…SWVM), 494–514 (MLVS…AFMV), 521–541 (MISI…FLFA), 554–574 (MISF…MFSV), and 699–719 (IKNI…MYNF). Residues 779-904 (GQGGGASDLE…EKVDSTSKGT (126 aa)) form a disordered region. Over residues 805–829 (TSAPAVTTPTASSSVASSSPKTVSS) the composition is skewed to low complexity. A compositionally biased stretch (pro residues) spans 838–850 (PPAPTEAVSPPPA). The segment covering 866–879 (IIRDNNQESKKEID) has biased composition (basic and acidic residues).

Belongs to the TrbL/VirB6 family.

The protein resides in the cell membrane. This is an uncharacterized protein from Rickettsia conorii (strain ATCC VR-613 / Malish 7).